The chain runs to 216 residues: U1 small nuclear ribonucleoprotein C (216 aa).

The segment at 4 to 36 adopts a Matrin-type zinc-finger fold; it reads FFCDYCDVYLTHDSMSVRKAHNSGRNHLRNVVD. Disordered regions lie at residues 70–89 and 125–216; these read PQNQPGGVPPGLGFPPPGAG and PGGI…ADKR. Pro residues-rich tracts occupy residues 140 to 149 and 157 to 204; these read PPMPPFPGMP and GVPP…PPFG.

This sequence belongs to the U1 small nuclear ribonucleoprotein C family. U1 snRNP is composed of the 7 core Sm proteins B/B', D1, D2, D3, E, F and G that assemble in a heptameric protein ring on the Sm site of the small nuclear RNA to form the core snRNP, and at least 3 U1 snRNP-specific proteins U1-70K, U1-A and U1-C. U1-C interacts with U1 snRNA and the 5' splice-site region of the pre-mRNA.

Its subcellular location is the nucleus. In terms of biological role, component of the spliceosomal U1 snRNP, which is essential for recognition of the pre-mRNA 5' splice-site and the subsequent assembly of the spliceosome. U1-C is directly involved in initial 5' splice-site recognition for both constitutive and regulated alternative splicing. The interaction with the 5' splice-site seems to precede base-pairing between the pre-mRNA and the U1 snRNA. Stimulates commitment or early (E) complex formation by stabilizing the base pairing of the 5' end of the U1 snRNA and the 5' splice-site region. This is U1 small nuclear ribonucleoprotein C from Neurospora crassa (strain ATCC 24698 / 74-OR23-1A / CBS 708.71 / DSM 1257 / FGSC 987).